A 197-amino-acid polypeptide reads, in one-letter code: MSHFFAHLSRLKLINRWPLMRNVRTENVSEHSLQVAFVAHALAIIKNRKFNGNLNAERIALLAMYHDASEVITGDLPTPIKYHNPKIAHEYKKIEKVAQQKLIEMLPKELQHDFRCLLDEHYYSEEEKALVKQADALCAYLKCLEELSAGNNEFIQAKARLENTLAIRQSPEMDYFMAVFVPSFSLSLDEISLDSLD.

Substrate is bound by residues 16 to 17 and His-31; that span reads RW. The HD domain maps to 28–140; it reads VSEHSLQVAF…VKQADALCAY (113 aa). His-31, His-66, and Asp-67 together coordinate a divalent metal cation. Substrate is bound by residues Asp-67, 75 to 78, and Asp-135; that span reads DLPT. A divalent metal cation is bound at residue Asp-135.

The protein belongs to the 5DNU family. In terms of assembly, homodimer. It depends on a divalent metal cation as a cofactor.

It localises to the cytoplasm. It catalyses the reaction a 2'-deoxyribonucleoside 5'-phosphate + H2O = a 2'-deoxyribonucleoside + phosphate. In terms of biological role, catalyzes the strictly specific dephosphorylation of 2'-deoxyribonucleoside 5'-monophosphates. The chain is 5'-deoxynucleotidase YPTB2590 from Yersinia pseudotuberculosis serotype I (strain IP32953).